Reading from the N-terminus, the 391-residue chain is Ferrochelatase (391 aa).

The Fe cation site is built by His-196 and Glu-281.

It belongs to the ferrochelatase family.

Its subcellular location is the cytoplasm. The enzyme catalyses heme b + 2 H(+) = protoporphyrin IX + Fe(2+). It functions in the pathway porphyrin-containing compound metabolism; protoheme biosynthesis; protoheme from protoporphyrin-IX: step 1/1. Catalyzes the ferrous insertion into protoporphyrin IX. The polypeptide is Ferrochelatase (Prochlorococcus marinus (strain MIT 9301)).